Here is a 1111-residue protein sequence, read N- to C-terminus: Lysylphosphatidylglycerol biosynthesis bifunctional protein LysX (1111 aa).

Residues Met1–Asp612 form a phosphatidylglycerol lysyltransferase region. 7 helical membrane-spanning segments follow: residues Val18–Val38, Phe60–Ala80, Ile84–Leu104, Val118–Phe138, Gly152–Phe172, Val209–Phe229, and Ala308–Gly328. The lysine--tRNA ligase stretch occupies residues Met613 to Arg1111. A DNA-binding region (OB) is located at residues Val674–Trp747. Residues Asp1023 and Glu1030 each contribute to the Mg(2+) site.

This sequence in the N-terminal section; belongs to the LPG synthetase family. It in the C-terminal section; belongs to the class-II aminoacyl-tRNA synthetase family. The cofactor is Mg(2+).

Its subcellular location is the cell membrane. The catalysed reaction is tRNA(Lys) + L-lysine + ATP = L-lysyl-tRNA(Lys) + AMP + diphosphate. It catalyses the reaction L-lysyl-tRNA(Lys) + a 1,2-diacyl-sn-glycero-3-phospho-(1'-sn-glycerol) = a 1,2-diacyl-sn-glycero-3-phospho-1'-(3'-O-L-lysyl)-sn-glycerol + tRNA(Lys). Functionally, catalyzes the production of L-lysyl-tRNA(Lys)transfer and the transfer of a lysyl group from L-lysyl-tRNA(Lys) to membrane-bound phosphatidylglycerol (PG), which produces lysylphosphatidylglycerol (LPG), one of the components of the bacterial membrane with a positive net charge. LPG synthesis contributes to the resistance to cationic antimicrobial peptides (CAMPs) and likely protects M.tuberculosis against the CAMPs produced by competiting microorganisms (bacteriocins). In fact, the modification of anionic phosphatidylglycerol with positively charged L-lysine results in repulsion of the peptides. This is Lysylphosphatidylglycerol biosynthesis bifunctional protein LysX (lysX) from Mycobacterium sp. (strain JLS).